Reading from the N-terminus, the 173-residue chain is Probable chemoreceptor glutamine deamidase CheD 2 (173 aa).

Belongs to the CheD family.

The catalysed reaction is L-glutaminyl-[protein] + H2O = L-glutamyl-[protein] + NH4(+). In terms of biological role, probably deamidates glutamine residues to glutamate on methyl-accepting chemotaxis receptors (MCPs), playing an important role in chemotaxis. This Albidiferax ferrireducens (strain ATCC BAA-621 / DSM 15236 / T118) (Rhodoferax ferrireducens) protein is Probable chemoreceptor glutamine deamidase CheD 2.